An 855-amino-acid chain; its full sequence is Oxysterol-binding protein-related protein 3 (855 aa).

Residues 1-32 (MSDEKNLGVSQKLVSPSRSTSSCSSKQGSRQD) are disordered. Ser15 and Ser33 each carry phosphoserine. The span at 15–31 (SPSRSTSSCSSKQGSRQ) shows a compositional bias: low complexity. The region spanning 50–145 (PPVQKGFLLK…WVSKLRHHRM (96 aa)) is the PH domain. The FFAT 1 motif lies at 161–167 (FFSGSSV). Ser199, Ser250, Ser272, Ser277, Ser288, Ser291, Ser340, Ser393, Ser405, and Ser408 each carry phosphoserine. The segment at 274-293 (PNLSTLDFGEEKSYSDGSEA) is disordered. A disordered region spans residues 377–396 (DPPAVPKPGDNLAEENSRDE). The FFAT 2 signature appears at 450–454 (LSLDN). Residues 468 to 490 (PVLESSGEARSKRRTSLPAPGPN) are disordered.

It belongs to the OSBP family. In terms of assembly, homodimer. Interacts with RRAS. Interacts (phosphorylated form) with VAPA. Interacts with OSBPL6. Post-translationally, phosphorylation is enhanced in vitro by phorbol-12-myristate-13-acetate (PMA), forskolin and calcium ionophore A23187. Phosphorylation seems to be stimulated in conditions of low cell-cell (or cell-matrix) adhesion. As to expression, expressed in spinal ganglia. Expressed in a subset of small lymphocytes (at protein level).

It localises to the endoplasmic reticulum membrane. The protein resides in the cytoplasm. It is found in the cytosol. The protein localises to the cell membrane. Its subcellular location is the cell projection. It localises to the filopodium tip. The protein resides in the nucleus membrane. Functionally, phosphoinositide-binding protein which associates with both cell and endoplasmic reticulum (ER) membranes. Can bind to the ER membrane protein VAPA and recruit VAPA to plasma membrane sites, thus linking these intracellular compartments. The ORP3-VAPA complex stimulates RRAS signaling which in turn attenuates integrin beta-1 (ITGB1) activation at the cell surface. With VAPA, may regulate ER morphology. Has a role in regulation of the actin cytoskeleton, cell polarity and cell adhesion. Binds to phosphoinositides with preference for PI(3,4)P2 and PI(3,4,5)P3. Also binds 25-hydroxycholesterol and cholesterol. The sequence is that of Oxysterol-binding protein-related protein 3 (Osbpl3) from Mus musculus (Mouse).